The chain runs to 331 residues: MTFEKVGVIGAGAWGTALAQVAARAGLAVTLQAREPEIVAAINDTHENAVFLPGIALEPGIKAVADLADLADCDLILAVAPAQHLRAALTAFAPHRKAGAPVVLCSKGVEQGSLKLMTDVAAEALPGAPIAVLSGPSFAGEVARNLPAAVTLACEDEALGRAIAEAIAIPTFRPYTANDLIGAEAGGAVKNVLAIACGIVEGKGLGRNAHATVITRGFAELTRLAVALGARPETVAGLCGLGDLVLTCSSPQSRNMSVGLALGQGLTLEQALAGKVSVAEGVASAPAVRALARKVGVEAPICEAVAAILAGEVAVDAAIAGLLSRPLKPEA.

The NADPH site is built by Trp14, Arg34, and Lys107. Sn-glycerol 3-phosphate is bound by residues Lys107, Gly135, and Ser137. Residue Ala139 coordinates NADPH. Sn-glycerol 3-phosphate is bound by residues Lys190, Asp243, Ser253, Arg254, and Asn255. Lys190 acts as the Proton acceptor in catalysis. NADPH is bound at residue Arg254. Residues Val278 and Glu280 each coordinate NADPH.

It belongs to the NAD-dependent glycerol-3-phosphate dehydrogenase family.

The protein resides in the cytoplasm. The catalysed reaction is sn-glycerol 3-phosphate + NAD(+) = dihydroxyacetone phosphate + NADH + H(+). It carries out the reaction sn-glycerol 3-phosphate + NADP(+) = dihydroxyacetone phosphate + NADPH + H(+). The protein operates within membrane lipid metabolism; glycerophospholipid metabolism. Functionally, catalyzes the reduction of the glycolytic intermediate dihydroxyacetone phosphate (DHAP) to sn-glycerol 3-phosphate (G3P), the key precursor for phospholipid synthesis. The protein is Glycerol-3-phosphate dehydrogenase [NAD(P)+] of Caulobacter vibrioides (strain ATCC 19089 / CIP 103742 / CB 15) (Caulobacter crescentus).